Reading from the N-terminus, the 128-residue chain is 3-aminoacrylate deaminase RutC (128 aa).

This sequence belongs to the RutC family.

It catalyses the reaction (Z)-3-aminoacrylate + H2O + H(+) = 3-oxopropanoate + NH4(+). In terms of biological role, involved in pyrimidine catabolism. Catalyzes the deamination of 3-aminoacrylate to malonic semialdehyde, a reaction that can also occur spontaneously. RutC may facilitate the reaction and modulate the metabolic fitness, rather than catalyzing essential functions. This chain is 3-aminoacrylate deaminase RutC, found in Enterobacter sp. (strain 638).